Reading from the N-terminus, the 727-residue chain is Glycerol-3-phosphate dehydrogenase, mitochondrial (727 aa).

Residues 1–42 (MAFQKAVKGTILVGGGALATVLGLSPFAHYRRKQVSLAYVEA) constitute a mitochondrion transit peptide. 71–99 (DILVIGGGATGCGCALDAVTRGLKTALVE) serves as a coordination point for FAD. Position 601 is a phosphotyrosine (Tyr601). 2 consecutive EF-hand domains span residues 623 to 658 (SDIDRYKKRFHKFDEDEKGFITIVDVQRVLESINVQ) and 659 to 694 (MDENTLHEILCEVDLNKNGQVELHEFLQLMSAVQKG). Asp672, Asn674, Asn676, Gln678, and Glu683 together coordinate Ca(2+).

This sequence belongs to the FAD-dependent glycerol-3-phosphate dehydrogenase family. It depends on FAD as a cofactor.

It is found in the mitochondrion inner membrane. It catalyses the reaction a quinone + sn-glycerol 3-phosphate = dihydroxyacetone phosphate + a quinol. It functions in the pathway polyol metabolism; glycerol degradation via glycerol kinase pathway; glycerone phosphate from sn-glycerol 3-phosphate (anaerobic route): step 1/1. Its activity is regulated as follows. Calcium-binding enhance the activity of the enzyme. In terms of biological role, calcium-responsive mitochondrial glycerol-3-phosphate dehydrogenase which seems to be a key component of the pancreatic beta-cell glucose-sensing device. The chain is Glycerol-3-phosphate dehydrogenase, mitochondrial from Mus musculus (Mouse).